Consider the following 248-residue polypeptide: Pulmonary surfactant-associated protein A2 (248 aa).

The signal sequence occupies residues 1-20 (MWLCPLALTLILMAASGAAC). A Collagen-like domain is found at 28–100 (GSPGIPGTPG…AGERGPPGLP (73 aa)). Residues Pro-30, Pro-33, Pro-36, Pro-42, Pro-54, Pro-57, Pro-63, Pro-67, and Pro-70 each carry the 4-hydroxyproline modification. Positions 33-101 (PGTPGSHGLP…GERGPPGLPA (69 aa)) are disordered. Basic and acidic residues predominate over residues 42–51 (PGRDGRDGVK). Over residues 54–70 (PGPPGPMGPPGETPCPP) the composition is skewed to pro residues. The segment covering 71–82 (GNNGLPGAPGVP) has biased composition (low complexity). Over residues 84 to 93 (ERGEKGEAGE) the composition is skewed to basic and acidic residues. The C-type lectin domain occupies 132–248 (MTVGEKVFSS…LYSRLTICEF (117 aa)). Intrachain disulfides connect Cys-155-Cys-246 and Cys-224-Cys-238. Asn-207 carries an N-linked (GlcNAc...) asparagine glycan.

It belongs to the SFTPA family. Oligomeric complex of 6 set of homotrimers. In terms of processing, N-acetylated.

It is found in the secreted. The protein localises to the extracellular space. The protein resides in the extracellular matrix. Its subcellular location is the surface film. In presence of calcium ions, it binds to surfactant phospholipids and contributes to lower the surface tension at the air-liquid interface in the alveoli of the mammalian lung and is essential for normal respiration. This Homo sapiens (Human) protein is Pulmonary surfactant-associated protein A2 (SFTPA2).